The chain runs to 329 residues: 4-hydroxythreonine-4-phosphate dehydrogenase (329 aa).

2 residues coordinate substrate: His136 and Thr137. 3 residues coordinate a divalent metal cation: His166, His211, and His266. Residues Lys274, Asn283, and Arg292 each contribute to the substrate site.

It belongs to the PdxA family. In terms of assembly, homodimer. Zn(2+) is required as a cofactor. Mg(2+) serves as cofactor. It depends on Co(2+) as a cofactor.

It localises to the cytoplasm. The enzyme catalyses 4-(phosphooxy)-L-threonine + NAD(+) = 3-amino-2-oxopropyl phosphate + CO2 + NADH. It participates in cofactor biosynthesis; pyridoxine 5'-phosphate biosynthesis; pyridoxine 5'-phosphate from D-erythrose 4-phosphate: step 4/5. In terms of biological role, catalyzes the NAD(P)-dependent oxidation of 4-(phosphooxy)-L-threonine (HTP) into 2-amino-3-oxo-4-(phosphooxy)butyric acid which spontaneously decarboxylates to form 3-amino-2-oxopropyl phosphate (AHAP). The chain is 4-hydroxythreonine-4-phosphate dehydrogenase from Pseudomonas putida (strain ATCC 47054 / DSM 6125 / CFBP 8728 / NCIMB 11950 / KT2440).